A 404-amino-acid polypeptide reads, in one-letter code: D-galactonate dehydratase family member Ent638_1932 (404 aa).

Substrate contacts are provided by Asn37 and His122. The Proton donor/acceptor role is filled by Tyr159. Position 212 (Asp212) interacts with Mg(2+). The active-site Proton donor/acceptor is His214. Positions 238 and 264 each coordinate Mg(2+). Residues Glu264, Arg285, His314, Asp318, and Glu341 each contribute to the substrate site.

It belongs to the mandelate racemase/muconate lactonizing enzyme family. GalD subfamily. Requires Mg(2+) as cofactor.

The enzyme catalyses D-mannonate = 2-dehydro-3-deoxy-D-gluconate + H2O. In terms of biological role, has low D-mannonate dehydratase activity (in vitro), suggesting that this is not a physiological substrate and that it has no significant role in D-mannonate degradation in vivo. Has no detectable activity with a panel of 70 other acid sugars (in vitro). This chain is D-galactonate dehydratase family member Ent638_1932, found in Enterobacter sp. (strain 638).